The chain runs to 171 residues: S-ribosylhomocysteine lyase (171 aa).

Fe cation is bound by residues His54, His58, and Cys128.

Belongs to the LuxS family. As to quaternary structure, homodimer. Requires Fe cation as cofactor.

The enzyme catalyses S-(5-deoxy-D-ribos-5-yl)-L-homocysteine = (S)-4,5-dihydroxypentane-2,3-dione + L-homocysteine. Its function is as follows. Involved in the synthesis of autoinducer 2 (AI-2) which is secreted by bacteria and is used to communicate both the cell density and the metabolic potential of the environment. The regulation of gene expression in response to changes in cell density is called quorum sensing. Catalyzes the transformation of S-ribosylhomocysteine (RHC) to homocysteine (HC) and 4,5-dihydroxy-2,3-pentadione (DPD). This is S-ribosylhomocysteine lyase from Escherichia coli (strain 55989 / EAEC).